The following is a 206-amino-acid chain: Orotate phosphoribosyltransferase (206 aa).

5-phospho-alpha-D-ribose 1-diphosphate-binding positions include arginine 97, lysine 98, lysine 101, and asparagine 125–serine 133. Position 157 (arginine 157) interacts with orotate.

It belongs to the purine/pyrimidine phosphoribosyltransferase family. PyrE subfamily. As to quaternary structure, homodimer. It depends on Mg(2+) as a cofactor.

The catalysed reaction is orotidine 5'-phosphate + diphosphate = orotate + 5-phospho-alpha-D-ribose 1-diphosphate. Its pathway is pyrimidine metabolism; UMP biosynthesis via de novo pathway; UMP from orotate: step 1/2. Its function is as follows. Catalyzes the transfer of a ribosyl phosphate group from 5-phosphoribose 1-diphosphate to orotate, leading to the formation of orotidine monophosphate (OMP). This chain is Orotate phosphoribosyltransferase, found in Chlamydia felis (strain Fe/C-56) (Chlamydophila felis).